The sequence spans 595 residues: Merlin (595 aa).

Phosphoserine is present on S13. Positions 22–311 (FTVRIVTMDA…GNHDLFMRRR (290 aa)) constitute an FERM domain. At S518 the chain carries Phosphoserine; by PAK.

As to quaternary structure, interacts with NHERF1, HGS and AGAP2. Interacts with SGSM3. Interacts (via FERM domain) with MPP1. Interacts with LAYN and WWC1. Interacts with the CUL4A-RBX1-DDB1-VprBP/DCAF1 E3 ubiquitin-protein ligase complex. The unphosphorylated form interacts (via FERM domain) with VPRBP/DCAF1. Interacts (via FERM domain) with NOP53; the interaction is direct. Interacts with SCHIP1; the interaction is direct. Post-translationally, phosphorylation of Ser-518 inhibits nuclear localization by disrupting the intramolecular association of the FERM domain with the C-terminal tail. Ubiquitinated by the CUL4A-RBX1-DDB1-DCAF1/VprBP E3 ubiquitin-protein ligase complex for ubiquitination and subsequent proteasome-dependent degradation. In terms of processing, phosphorylation of Ser-518 inhibits nuclear localization by disrupting the intramolecular association of the FERM domain with the C-terminal tail. The dephosphorylation of Ser-518 favors the interaction with NOP53.

Its subcellular location is the cell membrane. It is found in the cell projection. The protein resides in the cytoplasm. The protein localises to the cytoskeleton. It localises to the nucleus. In terms of biological role, probable regulator of the Hippo/SWH (Sav/Wts/Hpo) signaling pathway, a signaling pathway that plays a pivotal role in tumor suppression by restricting proliferation and promoting apoptosis. Along with WWC1 can synergistically induce the phosphorylation of LATS1 and LATS2 and can probably function in the regulation of the Hippo/SWH (Sav/Wts/Hpo) signaling pathway. May act as a membrane stabilizing protein. May inhibit PI3 kinase by binding to AGAP2 and impairing its stimulating activity. Suppresses cell proliferation and tumorigenesis by inhibiting the CUL4A-RBX1-DDB1-VprBP/DCAF1 E3 ubiquitin-protein ligase complex. The sequence is that of Merlin (NF2) from Papio anubis (Olive baboon).